A 784-amino-acid chain; its full sequence is DNA repair and recombination protein RAD54-like (784 aa).

Positions 1-50 are disordered; that stretch reads MRRSLAPSQRGPLRPESRHSFTPPLLKKNKRSCQQELEREQELDRKRQSA. A required for chromatin remodeling, strand pairing activities and coupling of ATPase activity region spans residues 2 to 9; sequence RRSLAPSQ. The residue at position 20 (serine 20) is a Phosphoserine. Threonine 22 is subject to Phosphothreonine. Basic and acidic residues predominate over residues 36–47; that stretch reads ELEREQELDRKR. The region spanning 172–346 is the Helicase ATP-binding domain; it reads EGKRGNFNGC…YSLVNFVNPE (175 aa). 185–192 contributes to the ATP binding site; it reads DEMGLGKT. A DEGH box motif is present at residues 297 to 300; sequence DEGH. Positions 503 to 660 constitute a Helicase C-terminal domain; sequence LLDFMLAAIR…NNESAEKHFT (158 aa). The span at 747–756 shows a compositional bias: low complexity; it reads VASAEEAASE. Residues 747-784 are disordered; the sequence is VASAEEAASEQPEEKPDRRKRPSTPLSDDSADEDFLGF. The span at 775–784 shows a compositional bias: acidic residues; sequence DSADEDFLGF.

It belongs to the SNF2/RAD54 helicase family. As to quaternary structure, interacts (via N-terminus) with spn-A/Rad51.

The protein resides in the nucleus. Functionally, involved in mitotic DNA repair and meiotic recombination. Functions in the recombinational DNA repair pathway. Essential for interhomolog gene conversion (GC), but may have a less important role in intersister GC than spn-A/Rad51. In the presence of DNA, spn-A/Rad51 enhances the ATPase activity of okr/Rad54. In Drosophila erecta (Fruit fly), this protein is DNA repair and recombination protein RAD54-like.